The chain runs to 712 residues: Eukaryotic translation initiation factor 3 subunit B (712 aa).

Residues 1-98 (MSLTEAEYHE…LFVQFETSEM (98 aa)) are sufficient for interaction with HCR1 and TIF32. Residues 1–224 (MSLTEAEYHE…GVQSWGGADF (224 aa)) form a sufficient for interaction with PIC8 region. The 88-residue stretch at 37 to 124 (NYVVVDGAPI…HRLLVNRLSD (88 aa)) folds into the RRM domain. WD repeat units lie at residues 191–229 (RKFF…SIDK), 230–293 (FMHN…RTFA), 301–339 (QKEM…LLDK), 342–384 (IKID…QTAR), 452–493 (ELKE…DFYA), 513–555 (ITDK…SNKN), and 566–604 (DKFS…YEFT).

The protein belongs to the eIF-3 subunit B family. In terms of assembly, component of the eukaryotic translation initiation factor 3 (eIF-3) complex.

It localises to the cytoplasm. RNA-binding component of the eukaryotic translation initiation factor 3 (eIF-3) complex, which is involved in protein synthesis of a specialized repertoire of mRNAs and, together with other initiation factors, stimulates binding of mRNA and methionyl-tRNAi to the 40S ribosome. The eIF-3 complex specifically targets and initiates translation of a subset of mRNAs involved in cell proliferation. This Scheffersomyces stipitis (strain ATCC 58785 / CBS 6054 / NBRC 10063 / NRRL Y-11545) (Yeast) protein is Eukaryotic translation initiation factor 3 subunit B.